Consider the following 258-residue polypeptide: MELDSLNTKPLRILISNDDGVHAQGIHALADELRSIAEVIIVAPDRNRSGASNSLTLEQPLRVSEIAPNTYSVQGTPTDCVHFALNELMKDDLPDLVLSGINHGANLGDDVLYSGTVAAAMEGHFLGVQAIAFSLVGKRHFESAAKIARQLVEQHLAAPIPTNRLLNVNVPDLPLESLGEIEVTRLGARHHAENMIKQKDPRGHDIYWLGPPGKEQDAGEGTDFYAIEHGRVSITPLQVDLTAHESLRAMDSWLKEEK.

A divalent metal cation-binding residues include D18, D19, S49, and N102.

The protein belongs to the SurE nucleotidase family. The cofactor is a divalent metal cation.

It localises to the cytoplasm. It carries out the reaction a ribonucleoside 5'-phosphate + H2O = a ribonucleoside + phosphate. Functionally, nucleotidase that shows phosphatase activity on nucleoside 5'-monophosphates. This chain is 5'-nucleotidase SurE, found in Vibrio parahaemolyticus serotype O3:K6 (strain RIMD 2210633).